The sequence spans 833 residues: Patatin-like phospholipase domain-containing protein SNOG_00918 (833 aa).

Disordered stretches follow at residues 1 to 20 (MTDVKKESDGPEPYSSSAFD) and 49 to 71 (HLSPSTEDLTAPQPETGKFSANN). Residues 108-128 (WPLLVVVLGWLLFLSIAYVFT) form a helical membrane-spanning segment. Residues 301 to 457 (LCLSGGATFA…RTDIPLKALN (157 aa)) form the PNPLA domain. A GXSXG motif is present at residues 332-336 (GTSGG). The active-site Nucleophile is serine 334. The active-site Proton acceptor is the aspartate 444. Disordered regions lie at residues 630-657 (TKSKSPSEEAIYPLSGSESSSSADFSRP) and 680-833 (LRTD…GKGL). Positions 644–655 (SGSESSSSADFS) are enriched in low complexity. Over residues 689–707 (DTPNSPSLSARLTGWWNTK) the composition is skewed to polar residues. Basic and acidic residues-rich tracts occupy residues 740 to 750 (RPPKEVRDLQA), 759 to 769 (RNSDFLEEIRR), and 782 to 794 (DEGRAGRYRRGDV). The span at 809-819 (EFGDNEGDGEE) shows a compositional bias: acidic residues.

Belongs to the PLPL family.

It localises to the membrane. Functionally, probable lipid hydrolase. This Phaeosphaeria nodorum (strain SN15 / ATCC MYA-4574 / FGSC 10173) (Glume blotch fungus) protein is Patatin-like phospholipase domain-containing protein SNOG_00918.